Consider the following 191-residue polypeptide: Fe/S biogenesis protein NfuA (191 aa).

[4Fe-4S] cluster-binding residues include Cys-149 and Cys-152.

Belongs to the NfuA family. As to quaternary structure, homodimer. [4Fe-4S] cluster is required as a cofactor.

Functionally, involved in iron-sulfur cluster biogenesis. Binds a 4Fe-4S cluster, can transfer this cluster to apoproteins, and thereby intervenes in the maturation of Fe/S proteins. Could also act as a scaffold/chaperone for damaged Fe/S proteins. This chain is Fe/S biogenesis protein NfuA, found in Photorhabdus laumondii subsp. laumondii (strain DSM 15139 / CIP 105565 / TT01) (Photorhabdus luminescens subsp. laumondii).